The following is a 226-amino-acid chain: Probable N-acetyl-alpha-D-glucosaminyl L-malate deacetylase 2 (226 aa).

Zn(2+) is bound by residues His13, Asp16, and His127.

It belongs to the PIGL family. Requires Zn(2+) as cofactor.

The enzyme catalyses (S)-malyl N-acetyl-alpha-D-glucosaminide + H2O = (S)-malyl alpha-D-glucosaminide + acetate. Its function is as follows. Involved in bacillithiol (BSH) biosynthesis. Catalyzes the second step of the pathway, the deacetylation of N-acetylglucosaminylmalate (GlcNAc-Mal) to glucosamine malate (GlcN-Mal). Could also be involved in bacillithiol-detoxifying pathways through formation of S-mercapturic adducts. The chain is Probable N-acetyl-alpha-D-glucosaminyl L-malate deacetylase 2 from Bacillus anthracis.